The chain runs to 496 residues: UDP-N-acetylmuramate--L-alanine ligase (496 aa).

ATP is bound at residue G122–T128.

Belongs to the MurCDEF family.

It localises to the cytoplasm. It catalyses the reaction UDP-N-acetyl-alpha-D-muramate + L-alanine + ATP = UDP-N-acetyl-alpha-D-muramoyl-L-alanine + ADP + phosphate + H(+). Its pathway is cell wall biogenesis; peptidoglycan biosynthesis. Its function is as follows. Cell wall formation. The polypeptide is UDP-N-acetylmuramate--L-alanine ligase (Mycolicibacterium paratuberculosis (strain ATCC BAA-968 / K-10) (Mycobacterium paratuberculosis)).